The following is a 448-amino-acid chain: Solute carrier family 52, riboflavin transporter, member 3-A (448 aa).

The next 3 membrane-spanning stretches (helical) occupy residues 11–31 (AFGL…PLIV), 40–60 (LPSY…LVTL), and 73–93 (LAIY…AVFW). N-linked (GlcNAc...) asparagine glycosylation occurs at N94. 2 helical membrane passes run 107–127 (AFFI…VTFL) and 138–158 (ITTY…VALA). N-linked (GlcNAc...) asparagine glycans are attached at residues N168, N171, N175, and N194. Transmembrane regions (helical) follow at residues 198–218 (EIFF…FLIL), 280–300 (AFIY…LPSV), 315–335 (LSAA…MFFP), 339–359 (LVFL…NMAM), 376–396 (AIIV…KVMV), and 407–427 (ALVW…IIMF).

The protein belongs to the riboflavin transporter family.

Its subcellular location is the cell membrane. It carries out the reaction riboflavin(in) = riboflavin(out). Plasma membrane transporter mediating the uptake by cells of the water soluble vitamin B2/riboflavin that plays a key role in biochemical oxidation-reduction reactions of the carbohydrate, lipid, and amino acid metabolism. The protein is Solute carrier family 52, riboflavin transporter, member 3-A (slc52a3a) of Danio rerio (Zebrafish).